Reading from the N-terminus, the 198-residue chain is Riboflavin synthase (198 aa).

Lumazine-binding repeat units follow at residues 1–95 (MFSG…IGGH) and 96–188 (FVSG…VDTV). Residues 4 to 6 (GII), 46 to 48 (CLT), 60 to 65 (DVTEET), 99 to 101 (GHV), Lys-130, 139 to 141 (SLT), and 153 to 158 (SVIPET) each bind 2,4-dihydroxypteridine.

Homotrimer.

The enzyme catalyses 2 6,7-dimethyl-8-(1-D-ribityl)lumazine + H(+) = 5-amino-6-(D-ribitylamino)uracil + riboflavin. It participates in cofactor biosynthesis; riboflavin biosynthesis; riboflavin from 2-hydroxy-3-oxobutyl phosphate and 5-amino-6-(D-ribitylamino)uracil: step 2/2. Its function is as follows. Catalyzes the dismutation of two molecules of 6,7-dimethyl-8-ribityllumazine, resulting in the formation of riboflavin and 5-amino-6-(D-ribitylamino)uracil. The polypeptide is Riboflavin synthase (ribE) (Chlamydia muridarum (strain MoPn / Nigg)).